Here is a 404-residue protein sequence, read N- to C-terminus: Multidrug resistance protein MdtG (404 aa).

The next 11 helical transmembrane spans lie at 19-39 (LGCFLTGAAFSLVMPFLPLYV), 56-76 (LVFSITFLFSAIASPFWGGLA), 90-110 (LGMAIVMLLMGMAQNIWQFLI), 113-133 (ALLGLLGGFIPNANALIATQV), 144-164 (TLSTGGVSGALLGPLAGGLLA), 171-191 (PVFFITASVLFICFLLTFFFI), 222-242 (LFVTTLIIQVATGSIAPILTL), 254-274 (IAFISGMIASVPGVAALLSAP), 288-308 (ILIVALIISVLLLIPMSFVQT), 317-337 (FLLGAADGALLPAVQTLLVYN), and 376-396 (AVFCVTAGVVLFNAIYSWNSL).

The protein belongs to the major facilitator superfamily. DHA1 family. MdtG (TC 2.A.1.2.20) subfamily.

It localises to the cell inner membrane. The protein is Multidrug resistance protein MdtG of Salmonella typhimurium (strain LT2 / SGSC1412 / ATCC 700720).